The chain runs to 127 residues: MORF4 family-associated protein 1-like 1 (127 aa).

Positions 87 to 118 (GEADERVSELCEKAEEKAKEIAKMAEMLVELV) form a coiled coil.

Belongs to the MORF4 family-associated protein family.

The chain is MORF4 family-associated protein 1-like 1 (MRFAP1L1) from Homo sapiens (Human).